Reading from the N-terminus, the 359-residue chain is 3-dehydroquinate synthase (359 aa).

NAD(+) is bound by residues 71-76, 105-109, 129-130, Lys142, and Lys151; these read DGEAYK, GVIGD, and TT. Zn(2+)-binding residues include Glu184, His247, and His264.

The protein belongs to the sugar phosphate cyclases superfamily. Dehydroquinate synthase family. Co(2+) is required as a cofactor. Requires Zn(2+) as cofactor. NAD(+) serves as cofactor.

Its subcellular location is the cytoplasm. The catalysed reaction is 7-phospho-2-dehydro-3-deoxy-D-arabino-heptonate = 3-dehydroquinate + phosphate. It participates in metabolic intermediate biosynthesis; chorismate biosynthesis; chorismate from D-erythrose 4-phosphate and phosphoenolpyruvate: step 2/7. Functionally, catalyzes the conversion of 3-deoxy-D-arabino-heptulosonate 7-phosphate (DAHP) to dehydroquinate (DHQ). This Burkholderia ambifaria (strain ATCC BAA-244 / DSM 16087 / CCUG 44356 / LMG 19182 / AMMD) (Burkholderia cepacia (strain AMMD)) protein is 3-dehydroquinate synthase.